Here is a 212-residue protein sequence, read N- to C-terminus: ER lumen protein-retaining receptor 1 (212 aa).

Over Met1–Phe4 the chain is Lumenal. A helical membrane pass occupies residues Arg5–Trp24. The Cytoplasmic portion of the chain corresponds to Lys25 to Ile32. A helical membrane pass occupies residues Ser33–Phe52. The segment at Arg47–Tyr48 is interaction with the K-D-E-L motif on target proteins. The Lumenal segment spans residues Thr53–Leu58. Residues Tyr59–Tyr79 form a helical membrane-spanning segment. Residues Ser80 to Thr92 lie on the Cytoplasmic side of the membrane. The helical transmembrane segment at Phe93 to Asn110 threads the bilayer. Residues His111–Leu116 are Lumenal-facing. Residues Glu117–Leu135 traverse the membrane as a helical segment. At Phe136–Ser149 the chain is on the cytoplasmic side. A helical membrane pass occupies residues His150–Trp168. An interaction with the K-D-E-L motif on target proteins region spans residues Arg159 to Arg169. The Lumenal portion of the chain corresponds to Arg169–Leu178. Residues Ile179–Ile199 traverse the membrane as a helical segment. Residues Thr200–Ala212 lie on the Cytoplasmic side of the membrane. The important for recycling of cargo proteins with the sequence motif K-D-E-L from the Golgi to the endoplasmic reticulum stretch occupies residues Lys204–Lys207. Ser209 bears the Phosphoserine; by PKA mark.

It belongs to the ERD2 family. As to quaternary structure, upon ligand binding the receptor oligomerizes and interacts with components of the transport machinery such as ARFGAP1 and ARF1. Post-translationally, phosphorylation by PKA at Ser-209 is required for endoplasmic reticulum retention function.

Its subcellular location is the golgi apparatus membrane. The protein resides in the cytoplasmic vesicle. It localises to the COPI-coated vesicle membrane. The protein localises to the endoplasmic reticulum membrane. It is found in the endoplasmic reticulum-Golgi intermediate compartment membrane. In terms of biological role, receptor for the C-terminal sequence motif K-D-E-L that is present on endoplasmic reticulum resident proteins and that mediates their recycling from the Golgi back to the endoplasmic reticulum. This chain is ER lumen protein-retaining receptor 1 (KDELR1), found in Homo sapiens (Human).